The following is an 82-amino-acid chain: Small ribosomal subunit protein uS17c (82 aa).

This sequence belongs to the universal ribosomal protein uS17 family. Part of the 30S ribosomal subunit.

It is found in the plastid. The protein resides in the chloroplast. One of the primary rRNA binding proteins, it binds specifically to the 5'-end of 16S ribosomal RNA. In Emiliania huxleyi (Coccolithophore), this protein is Small ribosomal subunit protein uS17c (rps17).